The primary structure comprises 918 residues: Dual serine/threonine and tyrosine protein kinase (918 aa).

A compositionally biased stretch (basic and acidic residues) spans 1 to 19 (MQKDGTRSSRRMEEGDRRN). A disordered region spans residues 1 to 29 (MQKDGTRSSRRMEEGDRRNGSTGSSGSVS). The Protein kinase domain occupies 643–897 (PRIGRELGRG…PLMGIVQPML (255 aa)). ATP contacts are provided by residues 649–657 (LGRGQYGVV) and Lys672. The active-site Proton acceptor is the Asp768.

The protein belongs to the protein kinase superfamily. Ser/Thr protein kinase family.

Its subcellular location is the cytoplasm. The protein resides in the cell membrane. The protein localises to the apical cell membrane. It is found in the basolateral cell membrane. It localises to the cell junction. It carries out the reaction L-seryl-[protein] + ATP = O-phospho-L-seryl-[protein] + ADP + H(+). The catalysed reaction is L-threonyl-[protein] + ATP = O-phospho-L-threonyl-[protein] + ADP + H(+). It catalyses the reaction L-tyrosyl-[protein] + ATP = O-phospho-L-tyrosyl-[protein] + ADP + H(+). May act as a positive regulator of ERK phosphorylation downstream of fibroblast growth factor-receptor activation. May induce both caspase-dependent apoptosis and caspase-independent cell death. May play a role in the embryonic development. The protein is Dual serine/threonine and tyrosine protein kinase (dstyk) of Xenopus tropicalis (Western clawed frog).